A 364-amino-acid chain; its full sequence is Ribosomal RNA large subunit methyltransferase F (364 aa).

The segment at Met1–Arg52 is disordered. Polar residues predominate over residues Thr25–Lys38.

The protein belongs to the methyltransferase superfamily. METTL16/RlmF family.

The protein localises to the cytoplasm. The enzyme catalyses adenosine(1618) in 23S rRNA + S-adenosyl-L-methionine = N(6)-methyladenosine(1618) in 23S rRNA + S-adenosyl-L-homocysteine + H(+). Its function is as follows. Specifically methylates the adenine in position 1618 of 23S rRNA. The chain is Ribosomal RNA large subunit methyltransferase F from Shewanella sp. (strain ANA-3).